A 241-amino-acid polypeptide reads, in one-letter code: Glutathione S-transferase theta-3 (241 aa).

Residues 2 to 82 form the GST N-terminal domain; it reads GLELYLDLMS…YLSRKYKAPD (81 aa). Glutathione is bound by residues 53–54 and 66–67; these read KV and ES. The 135-residue stretch at 88–222 folds into the GST C-terminal domain; it reads DLQTRARVDE…VVLKAKDMPP (135 aa).

This sequence belongs to the GST superfamily. Theta family. Homodimer. Expressed strongly in liver, and at lower levels in kidney and testis.

The protein resides in the cytoplasm. The enzyme catalyses RX + glutathione = an S-substituted glutathione + a halide anion + H(+). Functionally, conjugation of reduced glutathione to a wide number of exogenous and endogenous hydrophobic electrophiles. Shows high activity towards 4-nitrobenzyl chloride (4-NBC). Also has lower activity towards 1,2-epoxy-3-(p-nitrophenoxy)propane (EPNP), cumene hydroperoxide, 1-chloro-2,4-dinitrobenzene (CDNB), 7-chloro-4-nitrobenzo-2-oxa-1,3-diazole (NBD-Cl), and ethacrynic acid. The chain is Glutathione S-transferase theta-3 from Mus musculus (Mouse).